We begin with the raw amino-acid sequence, 557 residues long: MNTEMIYDAKWPEEFAERLKNDGPWANWELYKLSAEIQKTLAIPEFEGLRAPLYLPSFTPLPHQLEVAQKVVEKMNGKAILADEVGLGKTVEAGLILKEYMIRGLAKKILILVPASLVSQWVKELQEKFLIPAVEQKKSYVWEQCDIVVSSIDTAKRSPHREIVLSIPYDLVIIDEAHKLKNSKTKNYEFVRNLVKKYCLLLTATPIQNRIEEIFNLVSLLKPGHLGSQNHFQEEFAKKKSSLEAHEHLKDLVNKVMIRNRRHDTGLNWKQRHVETVPIQFSPSEQALYDEISRLKDSINKPASMFSIMTLQRECCSSREAVYMTLKKMLDQKEKQAPAIDEDTISVLIDRINQVTQNSKALQVVDLIKKIDDKVIIFTEYRATQIYLQWFLQQNGISSVPFRGGFKRGKKDWMKDLFRGKIQVLIATEAGGEGINLQFCNHMINYDLPWNPMRLEQRIGRIHRLGQERDVHIYNMATKHTVEEHILKLLYEKIHLFEKVVGELDDILTKIQVNNFEEHLHDILYHSATEEEMKIKMDNLTSFLSYKKQLPAEKRGS.

The region spanning 70-224 is the Helicase ATP-binding domain; sequence KVVEKMNGKA…FNLVSLLKPG (155 aa). Position 82 to 90 (82 to 90) interacts with ATP; that stretch reads ADEVGLGKT. The short motif at 175–178 is the DEAH box element; it reads DEAH. The Helicase C-terminal domain occupies 363-524; sequence QVVDLIKKID…NFEEHLHDIL (162 aa).

It belongs to the SNF2/RAD54 helicase family.

This is an uncharacterized protein from Bacillus subtilis (strain 168).